The sequence spans 773 residues: Elongin-A (773 aa).

The region spanning 4 to 79 (ESALQVVEKL…AQWKKLVPVE (76 aa)) is the TFIIS N-terminal domain. The span at 79–93 (ERNNEAEDQDFEKSN) shows a compositional bias: basic and acidic residues. The interval 79 to 480 (ERNNEAEDQD…PRKVPTDVLP (402 aa)) is disordered. Residues 112–124 (YQESWQASGSQPY) show a composition bias toward polar residues. Residues 136-156 (LPELERPHKVAHGHERRDERK) show a composition bias toward basic and acidic residues. Low complexity predominate over residues 162 to 174 (SPPYSSDPESSDY). At serine 195 the chain carries Phosphoserine. Basic residues predominate over residues 239–248 (KPHKSSHKEK). 2 stretches are compositionally biased toward basic and acidic residues: residues 249 to 265 (RPVD…MGRE) and 271 to 304 (SSKE…EGNS). At serine 310 the chain carries Phosphoserine. 2 stretches are compositionally biased toward basic and acidic residues: residues 317 to 339 (SDNH…KNKQ) and 368 to 380 (QEGK…DRKS). Serine 380 and serine 383 each carry phosphoserine. At lysine 430 the chain carries N6-acetyllysine. Position 515 is a phosphoserine (serine 515). Positions 521–680 (EAGFTGRRMN…PPRDVRRRQE (160 aa)) are activation domain. The BC-box stretch occupies residues 549 to 558 (TLHQQCIRVL). The F-box domain maps to 565–609 (IFEVGGVPYSVLEPVLERCTPDQLYRIEECNHVLIEETDQLWKVH). Residues 671–747 (PPRDVRRRQE…VASSSVSYDP (77 aa)) form a disordered region. A compositionally biased stretch (low complexity) spans 704–718 (SSHVPASNSSSSFHS). The segment covering 728–744 (PSTSSAHLAPVASSSVS) has biased composition (polar residues).

Heterotrimer of an A (ELOA, ELOA2 or ELOA3P), ELOB and ELOC subunit. Part of a multisubunit ubiquitin ligase complex consisting of elongin BC complex (ELOB and ELOC), elongin A/ELOA, RBX1 and CUL5. Interacts with ERCC6; the interaction is induced by DNA damaging agents or inhibitors of RNA polymerase II elongation. Interacts (via BC-box) with CUL5.

The protein localises to the nucleus. In terms of biological role, SIII, also known as elongin, is a general transcription elongation factor that increases the RNA polymerase II transcription elongation past template-encoded arresting sites. Subunit A is transcriptionally active and its transcription activity is strongly enhanced by binding to the dimeric complex of the SIII regulatory subunits B and C (elongin BC complex). As part of a multisubunit complex composed of elongin BC complex (ELOB and ELOC), elongin A/ELOA, RBX1 and CUL5; polyubiquitinates monoubiquitinated POLR2A. The polypeptide is Elongin-A (Eloa) (Rattus norvegicus (Rat)).